The chain runs to 1451 residues: MAYYTDSSSSESEDFEDVINQVVAEEDITGAAWYDGHLSEEDSPGGKPRPKEQLPKDIVKMDARAYQLEMLEASLKENIICAMDTGSGKTHVAILRIKAELEEMPEGQVVWFLTPTVSLCAQQYAVVKAQIPSVQTKIVTGADKVDSWSSTTWDGALLNVKVIITTPQVLLDALLHGFVNISSLALMVFDEAHHCNKNHAYSRVMKEFYWESKTKHEPVPRILGLTASPVVRSDISSLKRLESTLDAVCRSPTRHREELIANSQRPALFSIIYNPKLQPYAAGFSESLTKLMAARNKLNILEDPYVVSLRAEISDRSRRKLEKAIKEKRTYVQDTMKSFCRRSMEMAKELGAWAADWFISEAIRLFLAGIYRQGASSKSFRDAEVIFLARVFQDANIEPPPPLTTHSGLSEKVQRIIEVLLNYDKDARAICFVKERATTVVLSHILTTHPEVSSKFRIGTMVGTSFVPGVKRDFLDLPETGGSQCLEAFREGRKNMLVATSVLEEGIDVPACNLIICFDKPNNLRAFIQRRGRARMRQSHLYLFVEDEAEADWEALEAQMKLQYEDEKREHERLEAIENSEALDYPEELRVESTGARLTINDAKSHLQHFVSTLASRKFVQTQPDYLIEKVSQGYQPGDQPLLKATVLLPVSVPQALRQVTSSRTWVSEKNACMDAAFQAYKALYEAGLVDDHLLPLRDRLELELEVRPGMREVRGLYNPWLSIAAACTQGDVPLCRRALKVSDGNNSELCEFELAIPVALPEMKPMVVWWDHRAQLTLRIDSDAVMADTDVRHADQTTINQQDHTSVLLSLAYGHRNMTIRDDCILRLVSKSGPLSMEQLGQVEFAPGLVTANGSSYLVRDERDQSRHPYYFESVLPSKPPAESIRKVYRGFDEDPTEATYLSVRKWPKKTGFFHRPCSPQHSPSTKPYAYILPAETTTVDRIPLVYAQMGLLMPSLVCYTELYLVAAELSRKVLAPLRISNVSMLVEAICAKSARTPENYERIEFLGDSILKTCITVNLAATKLHLPEGILSLMKDRLVSNARLCRAACDAELDQFLVTQQLVTKGWQPPYMSDLAKQDQEPESKRILSPKTLADVVEALIGVSFVDGGLPKALECIRLFIPESQPRPFSEVRDILFGAAEPKGMKLPADLQLLEQLIEYSFCEKALLVEAVTHPSYNVSGTVACYDRLEFIGDAILDYIIVEEVFALEPALENWQMHLLRTALVNADILGFLIMEWSYKQMGFEVCRANEGDSDSKSSGDSTSDKASPRLEQTEVPIPLWSFMRQSSAELTMEREITKARFEELRDPILEAMRSGTHYPWALFARLHAQKFYSDFFEALVGAIWVDAGPGFDACRAFVARSGVLPYLKRLLRDQVHVLHPKEELGRLAGRERVEYVVKETLKDDGDGKEWACEVRVGGRYVTDVTGCLFKEESRVKAATQACEILKRK.

The interval 34–53 is disordered; it reads YDGHLSEEDSPGGKPRPKEQ. The 178-residue stretch at 70–247 folds into the Helicase ATP-binding domain; it reads MLEASLKENI…LKRLESTLDA (178 aa). ATP is bound at residue 83–90; the sequence is MDTGSGKT. Positions 190 to 193 match the DEAH box motif; it reads DEAH. The 171-residue stretch at 412-582 folds into the Helicase C-terminal domain; the sequence is KVQRIIEVLL…RLEAIENSEA (171 aa). In terms of domain architecture, Dicer dsRNA-binding fold spans 603–704; it reads AKSHLQHFVS…LPLRDRLELE (102 aa). RNase III domains follow at residues 968–1111 and 1153–1351; these read AAEL…VDGG and LQLL…VDAG. Glu1192 contacts Mg(2+). A disordered region spans residues 1253–1272; sequence EGDSDSKSSGDSTSDKASPR. The Mg(2+) site is built by Asp1337 and Glu1340.

It belongs to the helicase family. Dicer subfamily. The cofactor is Mg(2+). Requires Mn(2+) as cofactor.

Its function is as follows. Dicer-like endonuclease involved in cleaving double-stranded RNA in the RNA interference (RNAi) pathway. Produces 21 to 25 bp dsRNAs (siRNAs) which target the selective destruction of homologous RNAs leading to sequence-specific suppression of gene expression, called post-transcriptional gene silencing (PTGS). Part of a broad host defense, DCL-2 is involved in antiviral defense against mycoviruses like the hypovirus CHV1-EP713 and the reovirus MyRV1-Cp9B21. The chain is Dicer-like protein 2 (DCL-2) from Cryphonectria parasitica (Chestnut blight fungus).